A 133-amino-acid polypeptide reads, in one-letter code: ATP synthase epsilon chain (133 aa).

This sequence belongs to the ATPase epsilon chain family. In terms of assembly, F-type ATPases have 2 components, CF(1) - the catalytic core - and CF(0) - the membrane proton channel. CF(1) has five subunits: alpha(3), beta(3), gamma(1), delta(1), epsilon(1). CF(0) has three main subunits: a, b and c.

It localises to the cell inner membrane. Its function is as follows. Produces ATP from ADP in the presence of a proton gradient across the membrane. The sequence is that of ATP synthase epsilon chain from Desulfosudis oleivorans (strain DSM 6200 / JCM 39069 / Hxd3) (Desulfococcus oleovorans).